A 509-amino-acid chain; its full sequence is ATP synthase subunit alpha (509 aa).

169-176 (GDRQTGKT) contributes to the ATP binding site.

Belongs to the ATPase alpha/beta chains family. F-type ATPases have 2 components, CF(1) - the catalytic core - and CF(0) - the membrane proton channel. CF(1) has five subunits: alpha(3), beta(3), gamma(1), delta(1), epsilon(1). CF(0) has three main subunits: a(1), b(2) and c(9-12). The alpha and beta chains form an alternating ring which encloses part of the gamma chain. CF(1) is attached to CF(0) by a central stalk formed by the gamma and epsilon chains, while a peripheral stalk is formed by the delta and b chains.

It is found in the cell inner membrane. The catalysed reaction is ATP + H2O + 4 H(+)(in) = ADP + phosphate + 5 H(+)(out). Produces ATP from ADP in the presence of a proton gradient across the membrane. The alpha chain is a regulatory subunit. This is ATP synthase subunit alpha from Brucella abortus (strain S19).